The primary structure comprises 98 residues: NADH-ubiquinone oxidoreductase chain 4L (98 aa).

The next 3 helical transmembrane spans lie at 1–21 (MSLI…GLLM), 29–49 (ALLC…LTIL), and 61–81 (IILL…LVMI).

It belongs to the complex I subunit 4L family. Core subunit of respiratory chain NADH dehydrogenase (Complex I) which is composed of 45 different subunits.

Its subcellular location is the mitochondrion inner membrane. It carries out the reaction a ubiquinone + NADH + 5 H(+)(in) = a ubiquinol + NAD(+) + 4 H(+)(out). Functionally, core subunit of the mitochondrial membrane respiratory chain NADH dehydrogenase (Complex I) which catalyzes electron transfer from NADH through the respiratory chain, using ubiquinone as an electron acceptor. Part of the enzyme membrane arm which is embedded in the lipid bilayer and involved in proton translocation. The sequence is that of NADH-ubiquinone oxidoreductase chain 4L (MT-ND4L) from Berardius bairdii (Baird's beaked whale).